Reading from the N-terminus, the 291-residue chain is Glycine--tRNA ligase alpha subunit (291 aa).

Belongs to the class-II aminoacyl-tRNA synthetase family. Tetramer of two alpha and two beta subunits.

Its subcellular location is the cytoplasm. It catalyses the reaction tRNA(Gly) + glycine + ATP = glycyl-tRNA(Gly) + AMP + diphosphate. The sequence is that of Glycine--tRNA ligase alpha subunit from Geotalea uraniireducens (strain Rf4) (Geobacter uraniireducens).